Reading from the N-terminus, the 420-residue chain is Phosphoribosylamine--glycine ligase (420 aa).

Residues 108–314 (KEIMVKYGVS…FAQNITDILD (207 aa)) form the ATP-grasp domain. Residue 134 to 195 (IEKHGAPIVV…EEFLEGEEFS (62 aa)) participates in ATP binding. Positions 284 and 286 each coordinate Mg(2+).

The protein belongs to the GARS family. The cofactor is Mg(2+). Mn(2+) is required as a cofactor.

The enzyme catalyses 5-phospho-beta-D-ribosylamine + glycine + ATP = N(1)-(5-phospho-beta-D-ribosyl)glycinamide + ADP + phosphate + H(+). The protein operates within purine metabolism; IMP biosynthesis via de novo pathway; N(1)-(5-phospho-D-ribosyl)glycinamide from 5-phospho-alpha-D-ribose 1-diphosphate: step 2/2. This chain is Phosphoribosylamine--glycine ligase, found in Streptococcus pneumoniae (strain ATCC BAA-255 / R6).